The chain runs to 213 residues: Holliday junction resolvase RecU (213 aa).

4 residues coordinate Mg(2+): Thr-99, Asp-101, Glu-114, and Gln-133.

It belongs to the RecU family. Mg(2+) serves as cofactor.

It is found in the cytoplasm. The catalysed reaction is Endonucleolytic cleavage at a junction such as a reciprocal single-stranded crossover between two homologous DNA duplexes (Holliday junction).. Functionally, endonuclease that resolves Holliday junction intermediates in genetic recombination. Cleaves mobile four-strand junctions by introducing symmetrical nicks in paired strands. Promotes annealing of linear ssDNA with homologous dsDNA. Required for DNA repair, homologous recombination and chromosome segregation. The chain is Holliday junction resolvase RecU from Lactococcus lactis subsp. cremoris (strain MG1363).